The chain runs to 518 residues: Crotonobetaine/carnitine--CoA ligase (518 aa).

The protein belongs to the ATP-dependent AMP-binding enzyme family.

It catalyses the reaction 4-(trimethylamino)butanoate + ATP + CoA = 4-(trimethylamino)butanoyl-CoA + AMP + diphosphate. It carries out the reaction crotonobetaine + ATP + CoA = crotonobetainyl-CoA + AMP + diphosphate. The catalysed reaction is (R)-carnitine + ATP + CoA = (R)-carnitinyl-CoA + AMP + diphosphate. The protein operates within amine and polyamine metabolism; carnitine metabolism. Catalyzes the transfer of CoA to carnitine, generating the initial carnitinyl-CoA needed for the CaiB reaction cycle. Also has activity toward crotonobetaine and gamma-butyrobetaine. This is Crotonobetaine/carnitine--CoA ligase from Proteus sp. (strain LE138).